An 80-amino-acid polypeptide reads, in one-letter code: Exodeoxyribonuclease 7 small subunit (80 aa).

This sequence belongs to the XseB family. In terms of assembly, heterooligomer composed of large and small subunits.

It localises to the cytoplasm. The catalysed reaction is Exonucleolytic cleavage in either 5'- to 3'- or 3'- to 5'-direction to yield nucleoside 5'-phosphates.. Bidirectionally degrades single-stranded DNA into large acid-insoluble oligonucleotides, which are then degraded further into small acid-soluble oligonucleotides. This Aliivibrio fischeri (strain ATCC 700601 / ES114) (Vibrio fischeri) protein is Exodeoxyribonuclease 7 small subunit.